The following is a 99-amino-acid chain: Transcription factor 1 (99 aa).

May be involved in preference for HM-URA DNA regions lie at residues 52 to 77 (PVAR…SVGV) and 90 to 99 (EGLKYEDFAK). DNA-binding regions lie at residues phenylalanine 61 and 93–94 (KY).

This sequence belongs to the bacterial histone-like protein family. Homodimer.

Its function is as follows. Selectively binds to and inhibits the transcription of hydroxymethyluracil-(hmUra)-containing DNA, such as SP01 DNA, by RNA polymerase in vitro. This Bacillus phage SP01 (Bacteriophage SP01) protein is Transcription factor 1 (TF1).